A 466-amino-acid chain; its full sequence is Ras-GEF domain-containing family member 1C (466 aa).

Positions 1-23 (MPQTLSASDMVTPGSLSPPTTEP) are enriched in polar residues. Disordered stretches follow at residues 1 to 35 (MPQT…PLLD) and 443 to 466 (SESP…LGKT). The N-terminal Ras-GEF domain maps to 34–164 (LDGAPSSASL…LLQALHQKLA (131 aa)). Positions 200–446 (DPYTLAQQLT…YLASYESESP (247 aa)) constitute a Ras-GEF domain.

Guanine nucleotide exchange factor (GEF). The polypeptide is Ras-GEF domain-containing family member 1C (RASGEF1C) (Macaca fascicularis (Crab-eating macaque)).